The following is a 428-amino-acid chain: Exodeoxyribonuclease 7 large subunit (428 aa).

This sequence belongs to the XseA family. As to quaternary structure, heterooligomer composed of large and small subunits.

Its subcellular location is the cytoplasm. The enzyme catalyses Exonucleolytic cleavage in either 5'- to 3'- or 3'- to 5'-direction to yield nucleoside 5'-phosphates.. Its function is as follows. Bidirectionally degrades single-stranded DNA into large acid-insoluble oligonucleotides, which are then degraded further into small acid-soluble oligonucleotides. The sequence is that of Exodeoxyribonuclease 7 large subunit from Mycobacterium leprae (strain TN).